The chain runs to 128 residues: Small ribosomal subunit protein uS9 (128 aa).

A compositionally biased stretch (basic and acidic residues) spans 97–113; it reads RSEGFMTRDSRSVERKK. The segment at 97–128 is disordered; that stretch reads RSEGFMTRDSRSVERKKPGQPKARRRFQFSKR. A compositionally biased stretch (basic residues) spans 114–128; it reads PGQPKARRRFQFSKR.

Belongs to the universal ribosomal protein uS9 family.

This chain is Small ribosomal subunit protein uS9, found in Phocaeicola vulgatus (strain ATCC 8482 / DSM 1447 / JCM 5826 / CCUG 4940 / NBRC 14291 / NCTC 11154) (Bacteroides vulgatus).